A 351-amino-acid chain; its full sequence is Dihydroorotate dehydrogenase (quinone) (351 aa).

FMN-binding positions include Ala61–Lys65 and Thr85. Residue Lys65 participates in substrate binding. Asn110 to Phe114 lines the substrate pocket. FMN-binding residues include Asn139 and Asn172. Asn172 lines the substrate pocket. The active-site Nucleophile is the Ser175. Asn177 contributes to the substrate binding site. 2 residues coordinate FMN: Lys217 and Thr245. Position 246–247 (Asn246–Thr247) interacts with substrate. FMN contacts are provided by residues Gly268, Gly297, and Tyr318 to Ser319.

This sequence belongs to the dihydroorotate dehydrogenase family. Type 2 subfamily. Monomer. FMN serves as cofactor.

Its subcellular location is the cell membrane. The catalysed reaction is (S)-dihydroorotate + a quinone = orotate + a quinol. Its pathway is pyrimidine metabolism; UMP biosynthesis via de novo pathway; orotate from (S)-dihydroorotate (quinone route): step 1/1. In terms of biological role, catalyzes the conversion of dihydroorotate to orotate with quinone as electron acceptor. The polypeptide is Dihydroorotate dehydrogenase (quinone) (Xanthomonas campestris pv. campestris (strain 8004)).